Here is a 360-residue protein sequence, read N- to C-terminus: Phospho-N-acetylmuramoyl-pentapeptide-transferase (360 aa).

Transmembrane regions (helical) follow at residues 26–46, 72–92, 94–114, 132–152, 168–188, 199–219, 236–256, 263–283, 288–308, and 338–358; these read AIVS…RMIA, PTMG…LWAY, SNPY…IGFV, WKYF…YLAG, VMPQ…VGTG, GLAI…AWAT, AGEL…FLWF, VFMG…IAVL, FLLV…ILQV, and VIVR…ATLK.

It belongs to the glycosyltransferase 4 family. MraY subfamily. It depends on Mg(2+) as a cofactor.

Its subcellular location is the cell inner membrane. It carries out the reaction UDP-N-acetyl-alpha-D-muramoyl-L-alanyl-gamma-D-glutamyl-meso-2,6-diaminopimeloyl-D-alanyl-D-alanine + di-trans,octa-cis-undecaprenyl phosphate = di-trans,octa-cis-undecaprenyl diphospho-N-acetyl-alpha-D-muramoyl-L-alanyl-D-glutamyl-meso-2,6-diaminopimeloyl-D-alanyl-D-alanine + UMP. Its pathway is cell wall biogenesis; peptidoglycan biosynthesis. Catalyzes the initial step of the lipid cycle reactions in the biosynthesis of the cell wall peptidoglycan: transfers peptidoglycan precursor phospho-MurNAc-pentapeptide from UDP-MurNAc-pentapeptide onto the lipid carrier undecaprenyl phosphate, yielding undecaprenyl-pyrophosphoryl-MurNAc-pentapeptide, known as lipid I. The polypeptide is Phospho-N-acetylmuramoyl-pentapeptide-transferase (Enterobacter sp. (strain 638)).